A 318-amino-acid polypeptide reads, in one-letter code: Biotin synthase (318 aa).

Positions 46-272 (DGVDVEQLNN…RSVVKISGGR (227 aa)) constitute a Radical SAM core domain. [4Fe-4S] cluster contacts are provided by C61, C65, and C68. [2Fe-2S] cluster is bound by residues C105, C138, C197, and K267.

The protein belongs to the radical SAM superfamily. Biotin synthase family. As to quaternary structure, homodimer. It depends on [4Fe-4S] cluster as a cofactor. [2Fe-2S] cluster is required as a cofactor.

The catalysed reaction is (4R,5S)-dethiobiotin + (sulfur carrier)-SH + 2 reduced [2Fe-2S]-[ferredoxin] + 2 S-adenosyl-L-methionine = (sulfur carrier)-H + biotin + 2 5'-deoxyadenosine + 2 L-methionine + 2 oxidized [2Fe-2S]-[ferredoxin]. The protein operates within cofactor biosynthesis; biotin biosynthesis; biotin from 7,8-diaminononanoate: step 2/2. Catalyzes the conversion of dethiobiotin (DTB) to biotin by the insertion of a sulfur atom into dethiobiotin via a radical-based mechanism. The sequence is that of Biotin synthase from Cenarchaeum symbiosum (strain A).